The chain runs to 130 residues: Small ribosomal subunit protein uS8 (130 aa).

The protein belongs to the universal ribosomal protein uS8 family. Part of the 30S ribosomal subunit.

Its function is as follows. One of the primary rRNA binding proteins, it binds directly to 16S rRNA central domain where it helps coordinate assembly of the platform of the 30S subunit. This Methanosphaera stadtmanae (strain ATCC 43021 / DSM 3091 / JCM 11832 / MCB-3) protein is Small ribosomal subunit protein uS8.